We begin with the raw amino-acid sequence, 635 residues long: Chaperone protein HtpG (635 aa).

Positions 1 to 337 (MELKMHNVQE…SPDLPLNISR (337 aa)) are a; substrate-binding. Positions 338–556 (ETLQNNRVVE…EGAMDLRMER (219 aa)) are b. Positions 557–635 (FLREQKQLNY…LNNLLGKISV (79 aa)) are c.

Belongs to the heat shock protein 90 family. Homodimer.

The protein localises to the cytoplasm. In terms of biological role, molecular chaperone. Has ATPase activity. The sequence is that of Chaperone protein HtpG from Wolbachia pipientis wMel.